The following is a 303-amino-acid chain: Quinolinate synthase (303 aa).

Positions 24 and 41 each coordinate iminosuccinate. Cysteine 86 is a binding site for [4Fe-4S] cluster. Iminosuccinate contacts are provided by residues 112 to 114 and serine 129; that span reads YIN. Cysteine 172 contributes to the [4Fe-4S] cluster binding site. Iminosuccinate is bound by residues 198-200 and threonine 215; that span reads HPE. Cysteine 260 contributes to the [4Fe-4S] cluster binding site.

The protein belongs to the quinolinate synthase family. Type 2 subfamily. It depends on [4Fe-4S] cluster as a cofactor.

It is found in the cytoplasm. The enzyme catalyses iminosuccinate + dihydroxyacetone phosphate = quinolinate + phosphate + 2 H2O + H(+). It participates in cofactor biosynthesis; NAD(+) biosynthesis; quinolinate from iminoaspartate: step 1/1. In terms of biological role, catalyzes the condensation of iminoaspartate with dihydroxyacetone phosphate to form quinolinate. This is Quinolinate synthase from Caldicellulosiruptor bescii (strain ATCC BAA-1888 / DSM 6725 / KCTC 15123 / Z-1320) (Anaerocellum thermophilum).